Consider the following 166-residue polypeptide: DNA polymerase epsilon subunit C (166 aa).

The tract at residues Ser112 to Ser166 is disordered. Over residues Ile115–Glu151 the composition is skewed to acidic residues. Basic and acidic residues predominate over residues Pro152–Ser166.

Heterotetramer. Consists of four subunits: POL2, DPB2, DPB3 and DPB4.

It is found in the nucleus. Its function is as follows. As accessory component of the DNA polymerase epsilon (DNA polymerase II) participates in chromosomal DNA replication. The chain is DNA polymerase epsilon subunit C (DPB3) from Kluyveromyces lactis (strain ATCC 8585 / CBS 2359 / DSM 70799 / NBRC 1267 / NRRL Y-1140 / WM37) (Yeast).